The chain runs to 149 residues: Protein RhiC (149 aa).

An N-terminal signal peptide occupies residues methionine 1–glycine 23.

The protein resides in the periplasm. Functionally, may be involved in plant-microbe interaction. This chain is Protein RhiC (rhiC), found in Rhizobium leguminosarum bv. viciae.